The sequence spans 98 residues: MKATTIERIEDKLYQNRYLVDTRRPHITVRPHRSPSPSLLALTQICPAKCYEVNEIGQVAIVSDGCLECGTCRVLAEASGDIKWNYPRGGFGVLFKFG.

It to ferredoxins from P.putida and C.tartarivorum, ferredoxin I from A.vinelandii, ferredoxin II from D.desulfuricans.

In terms of biological role, could be a 3Fe-4S cluster-containing protein. This Rhizobium leguminosarum protein is Ferredoxin-like protein (fixX).